We begin with the raw amino-acid sequence, 1395 residues long: DNA-directed RNA polymerase subunit beta' (1395 aa).

Positions 70, 72, 85, and 88 each coordinate Zn(2+). Residues aspartate 470, aspartate 472, and aspartate 474 each contribute to the Mg(2+) site. Cysteine 815, cysteine 889, cysteine 896, and cysteine 899 together coordinate Zn(2+).

It belongs to the RNA polymerase beta' chain family. In terms of assembly, the RNAP catalytic core consists of 2 alpha, 1 beta, 1 beta' and 1 omega subunit. When a sigma factor is associated with the core the holoenzyme is formed, which can initiate transcription. Mg(2+) serves as cofactor. Zn(2+) is required as a cofactor.

The enzyme catalyses RNA(n) + a ribonucleoside 5'-triphosphate = RNA(n+1) + diphosphate. Functionally, DNA-dependent RNA polymerase catalyzes the transcription of DNA into RNA using the four ribonucleoside triphosphates as substrates. This Anaeromyxobacter sp. (strain Fw109-5) protein is DNA-directed RNA polymerase subunit beta'.